Here is a 652-residue protein sequence, read N- to C-terminus: Cleavage and polyadenylation specificity factor subunit 6 (652 aa).

Residues 20-85 are disordered; sequence QAQDEFGGDG…GVYHQSSGSL (66 aa). The RRM domain occupies 93–173; sequence YQLYVGNLTW…QAPVVTYPSK (81 aa). 2 disordered regions span residues 184–440 and 518–652; these read KTRP…QQMG and SYNR…RSRH. The segment covering 187–203 has biased composition (pro residues); the sequence is PVPPPQQNGPPRGPAPP. Gly residues predominate over residues 205 to 223; it reads MGGGPMPTGHPGGPQGGGP. 3 stretches are compositionally biased toward pro residues: residues 256 to 266, 295 to 307, and 338 to 352; these read SGPPRMQPPMH, GPRP…PPQR, and PQGP…PGPG. Low complexity predominate over residues 391 to 406; that stretch reads PGMNMPPQQGMNMTPQ. Pro residues predominate over residues 420–435; sequence GPWPPPQGKPPGPFPD. Basic and acidic residues predominate over residues 518–528; the sequence is SYNRRERSRSR. A compositionally biased stretch (basic residues) spans 529–538; sequence ERSHRSRQRR. Residues 539-590 are compositionally biased toward basic and acidic residues; sequence ERSTSRYRERSRERERDRDRERERDGGSYRERSRSRERERQAPDHYRDDSRS. The residue at position 596 (S596) is a Phosphoserine. The segment covering 598–610 has biased composition (low complexity); that stretch reads EPVVAEAAEAPSS. Over residues 612 to 652 the composition is skewed to basic and acidic residues; the sequence is RYYEDRERYRSSDRERRDRDRDRDRERERDRDRREEHRSRH.

This sequence belongs to the RRM CPSF6/7 family.

It is found in the nucleus. May play a role in pre-mRNA 3'-processing. This chain is Cleavage and polyadenylation specificity factor subunit 6, found in Drosophila melanogaster (Fruit fly).